The sequence spans 111 residues: Movement protein TGB2 (111 aa).

At 1-16 (MSSHQNFLTPPPDHSK) the chain is on the cytoplasmic side. Residues 17–37 (AILAVAVGVGLAIVLHFSLSY) traverse the membrane as a helical segment. Residues 38–72 (KLPSPGDNIHSLPFGGTYRDGTKSIIYNSPHRGPG) lie on the Lumenal side of the membrane. Residues 73–93 (QSGALPIITVFAIIECTLHVL) form a helical membrane-spanning segment. Over 94 to 111 (RKRDNPVRPQHSDCPNCS) the chain is Cytoplasmic.

The protein belongs to the Tymovirales TGBp2 protein family.

It is found in the host endoplasmic reticulum membrane. Plays a role in viral cell-to-cell propagation, by facilitating genome transport to neighboring plant cells through plasmosdesmata,. The protein is Movement protein TGB2 of Carica papaya (Papaya).